Here is a 209-residue protein sequence, read N- to C-terminus: High frequency lysogenization protein HflD homolog (209 aa).

Belongs to the HflD family.

The protein localises to the cytoplasm. It is found in the cell inner membrane. This Sodalis glossinidius (strain morsitans) protein is High frequency lysogenization protein HflD homolog.